We begin with the raw amino-acid sequence, 201 residues long: Holliday junction branch migration complex subunit RuvA (201 aa).

The segment at 1–64 (MFNSISGILS…EDQMRLFGFP (64 aa)) is domain I. Residues 65–140 (NQAERSLFLD…KLTNLNEVSS (76 aa)) are domain II. A flexible linker region spans residues 140 to 144 (SKGQA). Positions 145–201 (SVSCEYEDIVTALTEMGFERKSVIVQVEKIAEEMKAAGSDPLKNEEELFRRSIVALS) are domain III.

It belongs to the RuvA family. Homotetramer. Forms an RuvA(8)-RuvB(12)-Holliday junction (HJ) complex. HJ DNA is sandwiched between 2 RuvA tetramers; dsDNA enters through RuvA and exits via RuvB. An RuvB hexamer assembles on each DNA strand where it exits the tetramer. Each RuvB hexamer is contacted by two RuvA subunits (via domain III) on 2 adjacent RuvB subunits; this complex drives branch migration. In the full resolvosome a probable DNA-RuvA(4)-RuvB(12)-RuvC(2) complex forms which resolves the HJ.

Its subcellular location is the cytoplasm. The RuvA-RuvB-RuvC complex processes Holliday junction (HJ) DNA during genetic recombination and DNA repair, while the RuvA-RuvB complex plays an important role in the rescue of blocked DNA replication forks via replication fork reversal (RFR). RuvA specifically binds to HJ cruciform DNA, conferring on it an open structure. The RuvB hexamer acts as an ATP-dependent pump, pulling dsDNA into and through the RuvAB complex. HJ branch migration allows RuvC to scan DNA until it finds its consensus sequence, where it cleaves and resolves the cruciform DNA. The chain is Holliday junction branch migration complex subunit RuvA from Treponema denticola (strain ATCC 35405 / DSM 14222 / CIP 103919 / JCM 8153 / KCTC 15104).